We begin with the raw amino-acid sequence, 586 residues long: Cryptochrome-1 (586 aa).

The Photolyase/cryptochrome alpha/beta domain maps to 3 to 132 (VNAVHWFRKG…EVIVRISHTL (130 aa)). Lys11 participates in a covalent cross-link: Glycyl lysine isopeptide (Lys-Gly) (interchain with G-Cter in ubiquitin). The LIR 1 signature appears at 50–54 (NRWRF). At Ser71 the chain carries Phosphoserine; by AMPK. An LIR 2 motif is present at residues 82–87 (DVFPRL). Lys107 is covalently cross-linked (Glycyl lysine isopeptide (Lys-Gly) (interchain with G-Cter in ubiquitin)). The short motif at 151-156 (KRFQTL) is the LIR 3 element. A Glycyl lysine isopeptide (Lys-Gly) (interchain with G-Cter in ubiquitin) cross-link involves residue Lys159. At Ser247 the chain carries Phosphoserine; by MAPK. Ser252 provides a ligand contact to FAD. 2 consecutive short sequence motifs (LIR) follow at residues 255 to 260 (LRFGCL) and 271 to 276 (DLYKKV). Ser280 carries the post-translational modification Phosphoserine; by AMPK. The LIR 6 signature appears at 285–290 (SLYGQL). Gln289 lines the FAD pocket. Residue Lys329 forms a Glycyl lysine isopeptide (Lys-Gly) (interchain with G-Cter in ubiquitin) linkage. The LIR 7 signature appears at 335–339 (TGFPW). Residue His355 coordinates FAD. The interval 371–470 (WISWEEGMKV…LIGINYPKPM (100 aa)) is required for inhibition of CLOCK-BMAL1-mediated transcription. An LIR 8 motif is present at residues 379–384 (KVFEEL). FAD is bound at residue 387–389 (DAD). Short sequence motifs (LIR) lie at residues 395-400 (GSWMWL), 411-416 (HCYCPV), and 430-435 (RRYLPV). An interaction with TIMELESS region spans residues 471-493 (VNHAEASRLNIERMKQIYQQLSR). Lys485 participates in a covalent cross-link: Glycyl lysine isopeptide (Lys-Gly) (interchain with G-Cter in ubiquitin). 2 short sequence motifs (LIR) span residues 486 to 491 (QIYQQL) and 492 to 497 (SRYRGL). Polar residues predominate over residues 545 to 559 (QQTHLLKQGRSSMGT). The tract at residues 545–586 (QQTHLLKQGRSSMGTGLSGGKRPSQEEDTQSIGPKVQRQSTN) is disordered. Lys565 participates in a covalent cross-link: Glycyl lysine isopeptide (Lys-Gly) (interchain with G-Cter in ubiquitin). Ser568 bears the Phosphoserine mark.

The protein belongs to the DNA photolyase class-1 family. As to quaternary structure, component of the circadian core oscillator, which includes the CRY proteins, CLOCK or NPAS2, BMAL1 or BMAL2, CSNK1D and/or CSNK1E, TIMELESS, and the PER proteins. Interacts directly with TIMELESS. Interacts directly with PER1, PER2 and PER3; interaction with PER2 inhibits its ubiquitination and vice versa. Interacts with FBXL21. Interacts with FBXL3. Interacts with CLOCK-BMAL1 independently of PER2 and DNA. Interacts with HDAC1, HDAC2 and SIN3B. Interacts with nuclear receptors AR, NR1D1, NR3C1/GR, RORA and RORC; the interaction with at least NR3C1/GR is ligand dependent. Interacts with PRKDC. Interacts with the G protein subunit alpha GNAS; the interaction may block GPCR-mediated regulation of cAMP concentrations. Interacts with PRMT5. Interacts with EZH2. Interacts with MYBBP1A, DOCK7, HNRNPU, RPL7A, RPL8 and RPS3. Interacts with PPP5C (via TPR repeats). Interacts with MAP1LC3B. Interacts with CLOCK. Interacts with BMAL1. Interacts weakly with HDAC3; this interaction is enhanced in the presence of FBXL3. Interacts with TRIM28, KCTD5 and DDB1. Interacts with FOXO1. Interacts with DTL and DDB1-CUL4A complex. Interacts with HNF4A. Interacts with PSMD2 in a KDM8-dependent manner. Interacts with KDM8 in a FBXL3-dependent manner. Interacts with PPARG in a ligand-dependent manner. Interacts with PPARD (via domain NR LBD) and NR1I2 (via domain NR LBD) in a ligand-dependent manner. Interacts with PPARA, NR1I3 and VDR. The cofactor is FAD. (6R)-5,10-methylene-5,6,7,8-tetrahydrofolate is required as a cofactor. Phosphorylation on Ser-247 by MAPK is important for the inhibition of CLOCK-BMAL1-mediated transcriptional activity. Phosphorylation by CSNK1E requires interaction with PER1 or PER2. Phosphorylation at Ser-71 and Ser-280 by AMPK decreases protein stability. Phosphorylation at Ser-568 exhibits a robust circadian rhythm with a peak at CT8, increases protein stability, prevents SCF(FBXL3)-mediated degradation and is antagonized by interaction with PRKDC. In terms of processing, ubiquitinated by the SCF(FBXL3) and SCF(FBXL21) complexes, regulating the balance between degradation and stabilization. The SCF(FBXL3) complex is mainly nuclear and mediates ubiquitination and subsequent degradation of CRY1. In contrast, cytoplasmic SCF(FBXL21) complex-mediated ubiquitination leads to stabilize CRY1 and counteract the activity of the SCF(FBXL3) complex. The SCF(FBXL3) and SCF(FBXL21) complexes probably mediate ubiquitination at different Lys residues. Ubiquitination at Lys-11 and Lys-107 are specifically ubiquitinated by the SCF(FBXL21) complex but not by the SCF(FBXL3) complex. Ubiquitination may be inhibited by PER2. Deubiquitinated by USP7. Post-translationally, undergoes autophagy-mediated degradation in the liver in a time-dependent manner. Autophagic degradation of CRY1 (an inhibitor of gluconeogenesis) occurs during periods of reduced feeding allowing induction of gluconeogenesis and maintenance of blood glucose levels.

The protein resides in the cytoplasm. It is found in the nucleus. Its function is as follows. Transcriptional repressor which forms a core component of the circadian clock. The circadian clock, an internal time-keeping system, regulates various physiological processes through the generation of approximately 24 hour circadian rhythms in gene expression, which are translated into rhythms in metabolism and behavior. It is derived from the Latin roots 'circa' (about) and 'diem' (day) and acts as an important regulator of a wide array of physiological functions including metabolism, sleep, body temperature, blood pressure, endocrine, immune, cardiovascular, and renal function. Consists of two major components: the central clock, residing in the suprachiasmatic nucleus (SCN) of the brain, and the peripheral clocks that are present in nearly every tissue and organ system. Both the central and peripheral clocks can be reset by environmental cues, also known as Zeitgebers (German for 'timegivers'). The predominant Zeitgeber for the central clock is light, which is sensed by retina and signals directly to the SCN. The central clock entrains the peripheral clocks through neuronal and hormonal signals, body temperature and feeding-related cues, aligning all clocks with the external light/dark cycle. Circadian rhythms allow an organism to achieve temporal homeostasis with its environment at the molecular level by regulating gene expression to create a peak of protein expression once every 24 hours to control when a particular physiological process is most active with respect to the solar day. Transcription and translation of core clock components (CLOCK, NPAS2, BMAL1, BMAL2, PER1, PER2, PER3, CRY1 and CRY2) plays a critical role in rhythm generation, whereas delays imposed by post-translational modifications (PTMs) are important for determining the period (tau) of the rhythms (tau refers to the period of a rhythm and is the length, in time, of one complete cycle). A diurnal rhythm is synchronized with the day/night cycle, while the ultradian and infradian rhythms have a period shorter and longer than 24 hours, respectively. Disruptions in the circadian rhythms contribute to the pathology of cardiovascular diseases, cancer, metabolic syndromes and aging. A transcription/translation feedback loop (TTFL) forms the core of the molecular circadian clock mechanism. Transcription factors, CLOCK or NPAS2 and BMAL1 or BMAL2, form the positive limb of the feedback loop, act in the form of a heterodimer and activate the transcription of core clock genes and clock-controlled genes (involved in key metabolic processes), harboring E-box elements (5'-CACGTG-3') within their promoters. The core clock genes: PER1/2/3 and CRY1/2 which are transcriptional repressors form the negative limb of the feedback loop and interact with the CLOCK|NPAS2-BMAL1|BMAL2 heterodimer inhibiting its activity and thereby negatively regulating their own expression. This heterodimer also activates nuclear receptors NR1D1/2 and RORA/B/G, which form a second feedback loop and which activate and repress BMAL1 transcription, respectively. CRY1 and CRY2 have redundant functions but also differential and selective contributions at least in defining the pace of the SCN circadian clock and its circadian transcriptional outputs. More potent transcriptional repressor in cerebellum and liver than CRY2, though more effective in lengthening the period of the SCN oscillator. On its side, CRY2 seems to play a critical role in tuning SCN circadian period by opposing the action of CRY1. With CRY2, is dispensable for circadian rhythm generation but necessary for the development of intercellular networks for rhythm synchrony. Capable of translocating circadian clock core proteins such as PER proteins to the nucleus. Interacts with CLOCK-BMAL1 independently of PER proteins and is found at CLOCK-BMAL1-bound sites, suggesting that CRY may act as a molecular gatekeeper to maintainCLOCK-BMAL1 in a poised and repressed state until the proper time for transcriptional activation. Represses the CLOCK-BMAL1 induced transcription of BHLHE40/DEC1, ATF4, MTA1, KLF10 and NAMPT. May repress circadian target genes expression in collaboration with HDAC1 and HDAC2 through histone deacetylation. Mediates the clock-control activation of ATR and modulates ATR-mediated DNA damage checkpoint. In liver, mediates circadian regulation of cAMP signaling and gluconeogenesis by binding to membrane-coupled G proteins and blocking glucagon-mediated increases in intracellular cAMP concentrations and CREB1 phosphorylation. Inhibits hepatic gluconeogenesis by decreasing nuclear FOXO1 levels that down-regulates gluconeogenic gene expression. Besides its role in the maintenance of the circadian clock, is also involved in the regulation of other processes. Represses glucocorticoid receptor NR3C1/GR-induced transcriptional activity by binding to glucocorticoid response elements (GREs). Plays a key role in glucose and lipid metabolism modulation, in part, through the transcriptional regulation of genes involved in these pathways, such as LEP or ACSL4. Represses PPARD and its target genes in the skeletal muscle and limits exercise capacity. Plays an essential role in the generation of circadian rhythms in the retina. Represses the transcriptional activity of NR1I2. This chain is Cryptochrome-1 (CRY1), found in Macaca fascicularis (Crab-eating macaque).